Reading from the N-terminus, the 259-residue chain is MKLSTLNETTPLVFNYANYVTPQFVANAVNVIGGSPIMAREVAEFSDLVAVSDAVVVNTGTWRRAELLETVKLIQIANQTQTVVVLDPVAVGIPSRSVPVQELLTNSKVDIIRGNAAEIAWFAGIDFASHGIDAVGSGNIEQIAQLAANKTGAIIAMSGPSDVISDGKTTRVLPVNVPLLASNVGTGDALSAIIGAFNGDEISLDNTVRAMAMMKLAGLTASHQVTTPGYFANQVLDELYLLSESKLETFIAKEVKKYE.

M38 provides a ligand contact to substrate. Residues R113 and S158 each coordinate ATP. G185 contacts substrate.

This sequence belongs to the Thz kinase family. Mg(2+) is required as a cofactor.

It catalyses the reaction 5-(2-hydroxyethyl)-4-methylthiazole + ATP = 4-methyl-5-(2-phosphooxyethyl)-thiazole + ADP + H(+). Its pathway is cofactor biosynthesis; thiamine diphosphate biosynthesis; 4-methyl-5-(2-phosphoethyl)-thiazole from 5-(2-hydroxyethyl)-4-methylthiazole: step 1/1. In terms of biological role, catalyzes the phosphorylation of the hydroxyl group of 4-methyl-5-beta-hydroxyethylthiazole (THZ). This chain is Hydroxyethylthiazole kinase, found in Leuconostoc citreum (strain KM20).